Reading from the N-terminus, the 369-residue chain is Peptide chain release factor 1 (369 aa).

Q238 carries the N5-methylglutamine modification.

This sequence belongs to the prokaryotic/mitochondrial release factor family. Methylated by PrmC. Methylation increases the termination efficiency of RF1.

The protein localises to the cytoplasm. Peptide chain release factor 1 directs the termination of translation in response to the peptide chain termination codons UAG and UAA. This is Peptide chain release factor 1 from Parabacteroides distasonis (strain ATCC 8503 / DSM 20701 / CIP 104284 / JCM 5825 / NCTC 11152).